The sequence spans 1141 residues: DNA-directed RNA polymerase subunit beta (1141 aa).

This sequence belongs to the RNA polymerase beta chain family. The RNAP catalytic core consists of 2 alpha, 1 beta, 1 beta' and 1 omega subunit. When a sigma factor is associated with the core the holoenzyme is formed, which can initiate transcription.

The catalysed reaction is RNA(n) + a ribonucleoside 5'-triphosphate = RNA(n+1) + diphosphate. DNA-dependent RNA polymerase catalyzes the transcription of DNA into RNA using the four ribonucleoside triphosphates as substrates. The protein is DNA-directed RNA polymerase subunit beta of Frankia alni (strain DSM 45986 / CECT 9034 / ACN14a).